A 228-amino-acid polypeptide reads, in one-letter code: 7-cyano-7-deazaguanine synthase (228 aa).

9 to 19 (LSGGPDSTTVL) lines the ATP pocket. Positions 193, 203, 206, and 209 each coordinate Zn(2+).

The protein belongs to the QueC family. The cofactor is Zn(2+).

It carries out the reaction 7-carboxy-7-deazaguanine + NH4(+) + ATP = 7-cyano-7-deazaguanine + ADP + phosphate + H2O + H(+). The protein operates within purine metabolism; 7-cyano-7-deazaguanine biosynthesis. In terms of biological role, catalyzes the ATP-dependent conversion of 7-carboxy-7-deazaguanine (CDG) to 7-cyano-7-deazaguanine (preQ(0)). The sequence is that of 7-cyano-7-deazaguanine synthase from Rickettsia conorii (strain ATCC VR-613 / Malish 7).